The sequence spans 582 residues: SHC-transforming protein 2 (582 aa).

Disordered stretches follow at residues 1-24 (MTQG…APTT) and 47-70 (GPAA…AGPG). Pro residues predominate over residues 8-20 (RAPPAPPAPPEPE). A PID domain is found at 147 to 329 (LGPGVSYVVR…AGPEESAWGD (183 aa)). Residues 330-486 (EEDSLEHNYY…PTEEQLRQEP (157 aa)) form a CH1 region. Tyr-338, Tyr-339, and Tyr-414 each carry phosphotyrosine. Residues 460 to 481 (PLEDQWPSPPTRRAPVAPTEEQ) are disordered. The SH2 domain occupies 487 to 578 (WYHGRMSRRA…ESELHLRGVV (92 aa)).

As to quaternary structure, interacts with the Trk receptors in a phosphotyrosine-dependent manner and MEGF12. Once activated, binds to GRB2. Phosphorylated on tyrosines by the Trk receptors. In terms of tissue distribution, expressed in brain. Expressed at high level in the hypothalamus and at low level in the caudate nucleus.

Functionally, signaling adapter that couples activated growth factor receptors to signaling pathway in neurons. Involved in the signal transduction pathways of neurotrophin-activated Trk receptors in cortical neurons. This Homo sapiens (Human) protein is SHC-transforming protein 2 (SHC2).